Reading from the N-terminus, the 94-residue chain is MICOS complex subunit MIC12 (94 aa).

The helical transmembrane segment at 7–23 (YGSFSVVASVLGASYYY) threads the bilayer.

It belongs to the MICOS complex subunit Mic12 family. Component of the mitochondrial contact site and cristae organizing system (MICOS) complex.

The protein resides in the mitochondrion inner membrane. Component of the MICOS complex, a large protein complex of the mitochondrial inner membrane that plays crucial roles in the maintenance of crista junctions, inner membrane architecture, and formation of contact sites to the outer membrane. The polypeptide is MICOS complex subunit MIC12 (AIM5) (Eremothecium gossypii (strain ATCC 10895 / CBS 109.51 / FGSC 9923 / NRRL Y-1056) (Yeast)).